A 183-amino-acid chain; its full sequence is A-type ATP synthase subunit E (183 aa).

The protein belongs to the V-ATPase E subunit family. As to quaternary structure, has multiple subunits with at least A(3), B(3), C, D, E, F, H, I and proteolipid K(x).

The protein localises to the cell membrane. Functionally, component of the A-type ATP synthase that produces ATP from ADP in the presence of a proton gradient across the membrane. This Methanococcoides burtonii (strain DSM 6242 / NBRC 107633 / OCM 468 / ACE-M) protein is A-type ATP synthase subunit E.